The primary structure comprises 285 residues: MKGQVVRIIAGFYDVVDPKNRKLYPLLRGSGLLRLNETSPIVGDFVDFEEKGFIKKIYERKNQLIRPKVANIDQALVFISIREPNFSSLLLDKFLLVIEAKNIPVILLVTKIDLDSNFENLLLDYQKMNYNIFFINNKKNEIPVELKAELEKKLNFVIGQTGVGKTSFINNFLDKKFAIQEISQTLNRGKHTTRVVQIIEKENFRIIDSPGFSSFSYSEISKNEIRNAFKIFKKFSSDCKFRSCFHFQEKTDQCGIKRALKDGKIPENRYKNYLYFLGKYEKKNY.

The CP-type G domain maps to 61–215 (KNQLIRPKVA…IIDSPGFSSF (155 aa)). Residues 110-113 (TKID) and 159-167 (GQTGVGKTS) each bind GTP. Zn(2+) contacts are provided by cysteine 239, cysteine 244, histidine 246, and cysteine 254.

This sequence belongs to the TRAFAC class YlqF/YawG GTPase family. RsgA subfamily. As to quaternary structure, monomer. Associates with 30S ribosomal subunit, binds 16S rRNA. Zn(2+) serves as cofactor.

It localises to the cytoplasm. Its function is as follows. One of several proteins that assist in the late maturation steps of the functional core of the 30S ribosomal subunit. Helps release RbfA from mature subunits. May play a role in the assembly of ribosomal proteins into the subunit. Circularly permuted GTPase that catalyzes slow GTP hydrolysis, GTPase activity is stimulated by the 30S ribosomal subunit. In Mesomycoplasma hyopneumoniae (strain J / ATCC 25934 / NCTC 10110) (Mycoplasma hyopneumoniae), this protein is Small ribosomal subunit biogenesis GTPase RsgA.